A 117-amino-acid chain; its full sequence is Large ribosomal subunit protein uL18 (117 aa).

The protein belongs to the universal ribosomal protein uL18 family. Part of the 50S ribosomal subunit; part of the 5S rRNA/L5/L18/L25 subcomplex. Contacts the 5S and 23S rRNAs.

This is one of the proteins that bind and probably mediate the attachment of the 5S RNA into the large ribosomal subunit, where it forms part of the central protuberance. The polypeptide is Large ribosomal subunit protein uL18 (Klebsiella pneumoniae (strain 342)).